A 68-amino-acid polypeptide reads, in one-letter code: MRTSYLLLFTLCLLLSEMASGDNFLTGLGHRSDHYNCVRSGGQCLYSACPIYTRIQGTCYHGKAKCCK.

The N-terminal stretch at 1–21 (MRTSYLLLFTLCLLLSEMASG) is a signal peptide. A propeptide spanning residues 22–32 (DNFLTGLGHRS) is cleaved from the precursor. Disulfide bonds link Cys37-Cys66, Cys44-Cys59, and Cys49-Cys67.

The protein belongs to the beta-defensin family. In terms of assembly, monomer. Homodimer.

It is found in the secreted. Its subcellular location is the membrane. Functionally, has bactericidal activity. May act as a ligand for C-C chemokine receptor CCR6. Positively regulates the sperm motility and bactericidal activity in a CCR6-dependent manner. Binds to CCR6 and triggers Ca2+ mobilization in the sperm which is important for its motility. The polypeptide is Beta-defensin 1 (DEFB1) (Macaca mulatta (Rhesus macaque)).